The sequence spans 205 residues: Endoribonuclease YbeY (205 aa).

Zn(2+) is bound by residues histidine 124, histidine 128, and histidine 134. Positions 162–205 (GTAPVAPGGEAQVPNEALETSGKRQDHSLGEILPGGMSRRLAGS) are disordered.

This sequence belongs to the endoribonuclease YbeY family. Zn(2+) is required as a cofactor.

It localises to the cytoplasm. Single strand-specific metallo-endoribonuclease involved in late-stage 70S ribosome quality control and in maturation of the 3' terminus of the 16S rRNA. The sequence is that of Endoribonuclease YbeY from Beijerinckia indica subsp. indica (strain ATCC 9039 / DSM 1715 / NCIMB 8712).